The chain runs to 81 residues: Photosystem I iron-sulfur center (81 aa).

4Fe-4S ferredoxin-type domains follow at residues 2–31 and 39–68; these read SHSV…MIPW and IASA…VRVY. [4Fe-4S] cluster contacts are provided by cysteine 11, cysteine 14, cysteine 17, cysteine 21, cysteine 48, cysteine 51, cysteine 54, and cysteine 58.

The eukaryotic PSI reaction center is composed of at least 11 subunits. The cofactor is [4Fe-4S] cluster.

Its subcellular location is the plastid thylakoid membrane. It catalyses the reaction reduced [plastocyanin] + hnu + oxidized [2Fe-2S]-[ferredoxin] = oxidized [plastocyanin] + reduced [2Fe-2S]-[ferredoxin]. Functionally, apoprotein for the two 4Fe-4S centers FA and FB of photosystem I (PSI); essential for photochemical activity. FB is the terminal electron acceptor of PSI, donating electrons to ferredoxin. The C-terminus interacts with PsaA/B/D and helps assemble the protein into the PSI complex. Required for binding of PsaD and PsaE to PSI. PSI is a plastocyanin-ferredoxin oxidoreductase, converting photonic excitation into a charge separation, which transfers an electron from the donor P700 chlorophyll pair to the spectroscopically characterized acceptors A0, A1, FX, FA and FB in turn. This is Photosystem I iron-sulfur center from Cuscuta obtusiflora (Peruvian dodder).